The following is a 134-amino-acid chain: Holo-[acyl-carrier-protein] synthase (134 aa).

The Mg(2+) site is built by Asp-8 and Glu-57.

It belongs to the P-Pant transferase superfamily. AcpS family. It depends on Mg(2+) as a cofactor.

It is found in the cytoplasm. The enzyme catalyses apo-[ACP] + CoA = holo-[ACP] + adenosine 3',5'-bisphosphate + H(+). In terms of biological role, transfers the 4'-phosphopantetheine moiety from coenzyme A to a Ser of acyl-carrier-protein. The protein is Holo-[acyl-carrier-protein] synthase of Rhizobium etli (strain ATCC 51251 / DSM 11541 / JCM 21823 / NBRC 15573 / CFN 42).